The chain runs to 329 residues: Putative ubiquitin thioesterase otu1 (329 aa).

The interval 7 to 89 (RLKYENQSAV…ATSFSTNEPA (83 aa)) is UBX-like. Residues 85 to 127 (TNEPAKPPIPNAATKPTFPPQTEISNPPAVSHQSKNTSQDPPY) are disordered. The span at 115–124 (SHQSKNTSQD) shows a compositional bias: polar residues. Residues 135 to 254 (IALRVMPDDN…GIHYDLAALA (120 aa)) form the OTU domain. The interval 140-146 (MPDDNSC) is cys-loop. The active site involves Asp-143. The Nucleophile role is filled by Cys-146. The interval 193-203 (IRKETSWGGYI) is variable-loop. Residues 243 to 247 (YSGIH) form a his-loop region. Position 246 (Ile-246) interacts with substrate. His-247 is an active-site residue. The tract at residues 272–277 (VTITPY) is S2 site. A C2H2-type zinc finger spans residues 299 to 323 (IRCTICGTGLVGEKDATAHALATGH). The active site involves His-323.

It is found in the cytoplasm. The protein resides in the nucleus. The catalysed reaction is Thiol-dependent hydrolysis of ester, thioester, amide, peptide and isopeptide bonds formed by the C-terminal Gly of ubiquitin (a 76-residue protein attached to proteins as an intracellular targeting signal).. Hydrolase that can remove conjugated ubiquitin from proteins and may therefore play an important regulatory role at the level of protein turnover by preventing degradation. Has a role in meiosis. This Schizosaccharomyces pombe (strain 972 / ATCC 24843) (Fission yeast) protein is Putative ubiquitin thioesterase otu1 (otu1).